Here is a 339-residue protein sequence, read N- to C-terminus: UPF0324 membrane protein CPE0129 (339 aa).

8 helical membrane passes run I12–G30, T35–F54, L90–I112, Y122–V144, I156–Y178, V210–F232, W259–G281, and M316–I338.

Belongs to the UPF0324 family.

It is found in the cell membrane. The sequence is that of UPF0324 membrane protein CPE0129 from Clostridium perfringens (strain 13 / Type A).